A 79-amino-acid chain; its full sequence is Acyl carrier protein (79 aa).

Residues 2–77 form the Carrier domain; the sequence is SEIADKVKKI…DAIDYIEKQK (76 aa). Residue S37 is modified to O-(pantetheine 4'-phosphoryl)serine.

This sequence belongs to the acyl carrier protein (ACP) family. 4'-phosphopantetheine is transferred from CoA to a specific serine of apo-ACP by AcpS. This modification is essential for activity because fatty acids are bound in thioester linkage to the sulfhydryl of the prosthetic group.

It is found in the cytoplasm. It functions in the pathway lipid metabolism; fatty acid biosynthesis. In terms of biological role, carrier of the growing fatty acid chain in fatty acid biosynthesis. This Gluconacetobacter diazotrophicus (strain ATCC 49037 / DSM 5601 / CCUG 37298 / CIP 103539 / LMG 7603 / PAl5) protein is Acyl carrier protein.